Here is a 378-residue protein sequence, read N- to C-terminus: MKCAHFVQQQCLSCRHINQPMPVQVAAKSQVLSQLLSGFEVEQWREPVFGPESGFRNKAKMVVLGAAHQPILGIVTPTGEPVSLCDCNLYPIDMQQLLHRLELFVRQAGIPPYNVDKVKGELKFILLTRSQIKGEYLLRFVLRSHKSIERIERELPQLLSEYPQIKVVSVNIQPVHMAILEGEEELFLTEETRLSEQFNDVPLFIRPKSFFQTHPEIAAKLYQTAREWVAELKPDTLWDLFCGVGGFGLHCASKQSALTGIEISAEAITCAKLSAEAMGLTQVNFTALDSTGFAQGCDAKDKPDVVIVNPPRRGIGESLCQSLSAFAPKAILYSSCNPHTLAKDLACIQGYRVQKVQLFDMFPHTDHFEVLVMLLKDA.

The [4Fe-4S] cluster site is built by Cys-3, Cys-11, Cys-14, and Cys-87. Residues Gln-212, Phe-241, Glu-262, and Asn-309 each contribute to the S-adenosyl-L-methionine site. Residue Cys-336 is the Nucleophile of the active site.

It belongs to the class I-like SAM-binding methyltransferase superfamily. RNA M5U methyltransferase family. RlmC subfamily.

It catalyses the reaction uridine(747) in 23S rRNA + S-adenosyl-L-methionine = 5-methyluridine(747) in 23S rRNA + S-adenosyl-L-homocysteine + H(+). Functionally, catalyzes the formation of 5-methyl-uridine at position 747 (m5U747) in 23S rRNA. In Shewanella halifaxensis (strain HAW-EB4), this protein is 23S rRNA (uracil(747)-C(5))-methyltransferase RlmC.